A 501-amino-acid chain; its full sequence is Histone deacetylase 19 (501 aa).

The segment at 17–329 (RKVCYFYDPE…WCYETGVALG (313 aa)) is histone deacetylase. His149 functions as the Proton donor/acceptor in the catalytic mechanism. Positions 184, 186, and 272 each coordinate Zn(2+). Positions 383–501 (HAPSVPFQER…GAEQAFPPKT (119 aa)) are disordered. Positions 397–407 (ETPEVDEDQED) are enriched in acidic residues. Ser416 is modified (phosphoserine). 2 stretches are compositionally biased toward basic and acidic residues: residues 422-457 (DDRK…KGCE) and 479-488 (ASVKMEEEGT).

This sequence belongs to the histone deacetylase family. HD type 1 subfamily. Interacts with SIN3, SAP18 and TPR1. Interacts with CDKE-1, MED14 and LUG. Interacts with TPL. Interacts with AHL22. It depends on Zn(2+) as a cofactor. In terms of tissue distribution, highly expressed in leaves, stems, flowers and young siliques.

The protein resides in the nucleus. It catalyses the reaction N(6)-acetyl-L-lysyl-[histone] + H2O = L-lysyl-[histone] + acetate. Responsible for the deacetylation of lysine residues on the N-terminal part of the core histones (H2A, H2B, H3 and H4). Histone deacetylation gives a tag for epigenetic repression and plays an important role in transcriptional regulation, cell cycle progression and developmental events. Histone deacetylases act via the formation of large multiprotein complexes. HDA19 is involved in jasmonic acid and ethylene signaling of pathogen response. Part of a repressor complex including APETALA2 (AP2) and TOPLESS (TPL) that control the expression domains of numerous floral organ identity genes. Involved in negative regulation of salinity stress response. Represses the expression of stress tolerance-related genes, genes coding for late embryogenesis abundant (LEA) proteins that prevent protein aggregation, and positive regulators of abscisic acid (ABA) signaling, such as ABI5 and NAC019. This Arabidopsis thaliana (Mouse-ear cress) protein is Histone deacetylase 19.